A 252-amino-acid polypeptide reads, in one-letter code: MKILLTNDDGVQGLGMLKLAEYLKDKYKVTVVAPEKERSAISHAITLHKPLRLKKVKEEDSLKIYAINGTPSDCVKLGIEVVLREKPDIVISGINEGLNLGTDILYSGTVSAAIEAAIYGIPAIAVSRAETADIEDRRIYKFLENLIEKVLEKGLPKNTLLNVNIPDFKKGIKGVKATILGKSIYIETFQKNYDPRGKEYYWMAGKISEIEKDERTDIVSVKEGYISITPIHFDLTEYNMINILNSWDIKIE.

Asp8, Asp9, Ser39, and Asn95 together coordinate a divalent metal cation.

This sequence belongs to the SurE nucleotidase family. It depends on a divalent metal cation as a cofactor.

The protein localises to the cytoplasm. It carries out the reaction a ribonucleoside 5'-phosphate + H2O = a ribonucleoside + phosphate. Its function is as follows. Nucleotidase that shows phosphatase activity on nucleoside 5'-monophosphates. This Thermoanaerobacter sp. (strain X514) protein is 5'-nucleotidase SurE.